We begin with the raw amino-acid sequence, 591 residues long: ATPase family AAA domain-containing protein 3A (591 aa).

The disordered stretch occupies residues 1–52 (MSWLFGIKGPKGEGTGPPLPLPPAQPGAEGGGDRGAGDRPSPKDKWSNFDPT). At Ser-2 the chain carries N-acetylserine. Residues 2-49 (SWLFGIKGPKGEGTGPPLPLPPAQPGAEGGGDRGAGDRPSPKDKWSNF) are required for interaction with the inner surface of the mitochondrial outer membrane. Topologically, residues 2 to 245 (SWLFGIKGPK…FRAFVTDWDK (244 aa)) are mitochondrial intermembrane. A compositionally biased stretch (basic and acidic residues) spans 31–47 (GGDRGAGDRPSPKDKWS). Residues 55 to 216 (ERAAKAAREL…REQIRLKAAE (162 aa)) are a coiled coil. A helical membrane pass occupies residues 246–263 (VTATVAGLTLLAVGVYSA). Residues 264–586 (KNATSVAGRY…DSQTNKPPHP (323 aa)) are Mitochondrial matrix-facing. The interval 289-304 (RISVLEALRHPIQVSR) is S100B-binding. 351 to 358 (GPPGTGKT) contributes to the ATP binding site. Lys-490 carries the N6-acetyllysine; alternate modification. Position 490 is an N6-succinyllysine; alternate (Lys-490). N6-acetyllysine occurs at positions 494 and 512. The tract at residues 572–591 (KVERPDSQTNKPPHPSLLSC) is disordered.

This sequence belongs to the AAA ATPase family. Can form homooligomers. Homodimer formation at the N-terminus may be regulated by ATP and is required for the interaction with the inner surface of the mitochondrial outer membrane and correct mitochondrial homeostasis. Interacts with components of the mitochondrial ribosome and with other proteins involved in mitochondrial RNA metabolism. May also interact with protein involved in lipid metabolism, including STARD9. May interact with FAM210A. Interacts with GADD45GIP1. Interacts with S100B in a Ca(+2)- and Zn(+2)-dependent manner; this interaction probably occurs in the cytosol prior to mitochondrial targeting. S100B could assist ATAD3A cytoplasmic processing, preventing aggregation and favoring mitochondrial localization. Interacts with HSP60/HSPD1. Interacts with CLPB. Interacts with EIF2AK3/PERK; ATAD3A and EIF2S1/eIF-2-alpha occupy a common binding site within the cytoplasmic loop of EIF2AK3/PERK, leading to prevent EIF2AK3/PERK association with its substrate EIF2S1/eIF-2-alpha. Expressed in heart, spleen, kidney, liver and at smaller levels, in lung and muscle (at protein level).

It localises to the mitochondrion inner membrane. The protein resides in the mitochondrion matrix. Its subcellular location is the mitochondrion nucleoid. The catalysed reaction is ATP + H2O = ADP + phosphate + H(+). In terms of biological role, essential for mitochondrial network organization, mitochondrial metabolism and cell growth at organism and cellular level. May play an important role in mitochondrial protein synthesis. May also participate in mitochondrial DNA replication. May bind to mitochondrial DNA D-loops and contribute to nucleoid stability. Required for enhanced channeling of cholesterol for hormone-dependent steroidogenesis. Involved in mitochondrial-mediated antiviral innate immunity. Required to protect mitochondria from the PERK-mediated unfolded protein response: specifically inhibits the activity of EIF2AK3/PERK at mitochondria-endoplasmic reticulum contact sites, thereby providing a safe haven for mitochondrial protein translation during endoplasmic reticulum stress. Ability to inhibit EIF2AK3/PERK is independent of its ATPase activity. Also involved in the mitochondrial DNA damage response by promoting signaling between damaged genomes and the mitochondrial membrane, leading to activation of the integrated stress response (ISR). This is ATPase family AAA domain-containing protein 3A (Atad3a) from Mus musculus (Mouse).